The following is a 1481-amino-acid chain: Structural protein ORF147 (1481 aa).

2 disordered regions span residues 65–88 and 1319–1403; these read AEKR…ENLE and DEKL…PPIP. 3 stretches are compositionally biased toward low complexity: residues 73 to 84, 1323 to 1336, and 1393 to 1403; these read KGSQKKSNSSSS, SSTV…SPKT, and SSRTTITPPIP.

The protein resides in the virion. This is Structural protein ORF147 from Noctuidae (owlet moths).